We begin with the raw amino-acid sequence, 600 residues long: Adenine deaminase 3 (600 aa).

Belongs to the metallo-dependent hydrolases superfamily. Adenine deaminase family. The cofactor is Mn(2+).

The enzyme catalyses adenine + H2O + H(+) = hypoxanthine + NH4(+). The sequence is that of Adenine deaminase 3 from Rhizobium johnstonii (strain DSM 114642 / LMG 32736 / 3841) (Rhizobium leguminosarum bv. viciae).